A 173-amino-acid polypeptide reads, in one-letter code: Translation initiation factor IF-3 (173 aa).

It belongs to the IF-3 family. In terms of assembly, monomer.

The protein resides in the cytoplasm. Its function is as follows. IF-3 binds to the 30S ribosomal subunit and shifts the equilibrium between 70S ribosomes and their 50S and 30S subunits in favor of the free subunits, thus enhancing the availability of 30S subunits on which protein synthesis initiation begins. The sequence is that of Translation initiation factor IF-3 from Methylobacterium radiotolerans (strain ATCC 27329 / DSM 1819 / JCM 2831 / NBRC 15690 / NCIMB 10815 / 0-1).